The following is an 802-amino-acid chain: Outer membrane usher protein CssD (802 aa).

This sequence belongs to the fimbrial export usher family.

The protein localises to the cell outer membrane. Its function is as follows. Involved in the export and assembly of C6 fimbrial subunits across the outer membrane. In Escherichia coli, this protein is Outer membrane usher protein CssD (cssD).